The following is a 233-amino-acid chain: Ribose-5-phosphate isomerase A (233 aa).

Substrate contacts are provided by residues 28–31, 85–88, and 98–101; these read TGST, DGAD, and KGLG. The active-site Proton acceptor is the E107. K125 is a binding site for substrate.

It belongs to the ribose 5-phosphate isomerase family. As to quaternary structure, homodimer.

The enzyme catalyses aldehydo-D-ribose 5-phosphate = D-ribulose 5-phosphate. It functions in the pathway carbohydrate degradation; pentose phosphate pathway; D-ribose 5-phosphate from D-ribulose 5-phosphate (non-oxidative stage): step 1/1. Its function is as follows. Catalyzes the reversible conversion of ribose-5-phosphate to ribulose 5-phosphate. In Roseiflexus sp. (strain RS-1), this protein is Ribose-5-phosphate isomerase A.